The sequence spans 56 residues: Ribosome modulation factor (56 aa).

Belongs to the ribosome modulation factor family.

Its subcellular location is the cytoplasm. Its function is as follows. During stationary phase, converts 70S ribosomes to an inactive dimeric form (100S ribosomes). This chain is Ribosome modulation factor, found in Proteus mirabilis (strain HI4320).